The following is a 710-amino-acid chain: Ferrioxamine receptor (710 aa).

The signal sequence occupies residues 1–26 (MFSAFIIKRSAILCSLAMFIPLASIA). The TonB box signature appears at 28–35 (DTIEVTAK). The next 30 membrane-spanning stretches (beta stranded) occupy residues 29–37 (TIEVTAKAG), 65–73 (TAQSVSVVT), 91–99 (YTPGVFTGF), 106–114 (YDTVALRGF), 137–145 (NVLQVDPWF), 152–160 (IKGPSSALY), 180–188 (SEGHFRLTA), 194–202 (QVAAFDYTD), 208–216 (WAFRLTGIT), 259–267 (GGYHSAVPA), 271–279 (IYGQKLSRG), 293–301 (WQQIYSYEF), 309–317 (WSFRQNASY), 353–361 (FAVDNQLEA), 370–378 (HKVLLGVDF), 427–435 (YEQSGVYLQ), 443–451 (WHLNLSGRY), 476–484 (GRASLLYSF), 491–499 (YVSYSQAIT), 517–525 (EQYEVGIIY), 531–539 (TSLYSAALY), 555–563 (YYVPAGKVN), 567–575 (LELEARSQI), 579–587 (LSVIAGYTY), 610–618 (NMASLWAQY), 624–632 (INVGAGIRY), 649–657 (YTLGDASVR), 671–679 (FVQLNVNNI), 684–692 (YVAACYSTS), and 702–710 (VQATVGYDF). The 114-residue stretch at 61–174 (PLILTAQSVS…PGGVVMMTSK (114 aa)) folds into the TBDR plug domain. The region spanning 181-710 (EGHFRLTAGN…SVQATVGYDF (530 aa)) is the TBDR beta-barrel domain. The short motif at 693-710 (YCYWGAERSVQATVGYDF) is the TonB C-terminal box element.

Belongs to the TonB-dependent receptor family.

The protein resides in the cell outer membrane. Functionally, ferrioxamine binding and uptake, in association with the TonB protein. The sequence is that of Ferrioxamine receptor (foxA) from Yersinia enterocolitica.